The chain runs to 243 residues: 2-C-methyl-D-erythritol 4-phosphate cytidylyltransferase (243 aa).

It belongs to the IspD/TarI cytidylyltransferase family. IspD subfamily.

The catalysed reaction is 2-C-methyl-D-erythritol 4-phosphate + CTP + H(+) = 4-CDP-2-C-methyl-D-erythritol + diphosphate. It functions in the pathway isoprenoid biosynthesis; isopentenyl diphosphate biosynthesis via DXP pathway; isopentenyl diphosphate from 1-deoxy-D-xylulose 5-phosphate: step 2/6. Its function is as follows. Catalyzes the formation of 4-diphosphocytidyl-2-C-methyl-D-erythritol from CTP and 2-C-methyl-D-erythritol 4-phosphate (MEP). In Pelodictyon phaeoclathratiforme (strain DSM 5477 / BU-1), this protein is 2-C-methyl-D-erythritol 4-phosphate cytidylyltransferase.